The primary structure comprises 137 residues: Holo-[acyl-carrier-protein] synthase (137 aa).

Mg(2+) is bound by residues Asp-8 and Glu-61.

It belongs to the P-Pant transferase superfamily. AcpS family. It depends on Mg(2+) as a cofactor.

The protein resides in the cytoplasm. It catalyses the reaction apo-[ACP] + CoA = holo-[ACP] + adenosine 3',5'-bisphosphate + H(+). Functionally, transfers the 4'-phosphopantetheine moiety from coenzyme A to a Ser of acyl-carrier-protein. This chain is Holo-[acyl-carrier-protein] synthase, found in Afipia carboxidovorans (strain ATCC 49405 / DSM 1227 / KCTC 32145 / OM5) (Oligotropha carboxidovorans).